We begin with the raw amino-acid sequence, 380 residues long: Cytochrome b (380 aa).

A run of 4 helical transmembrane segments spans residues 34–54, 78–99, 114–134, and 179–199; these read FGSL…LLAM, WLIR…FLHI, WNTG…GYVL, and FFAL…THLM. The heme b site is built by His-84 and His-98. Residues His-183 and His-197 each coordinate heme b. An a ubiquinone-binding site is contributed by His-202. The next 4 membrane-spanning stretches (helical) occupy residues 227–247, 289–309, 321–341, and 348–368; these read LKDI…ALFS, LGGV…PFLH, LSQA…WVGS, and FIII…ILFP.

Belongs to the cytochrome b family. In terms of assembly, the cytochrome bc1 complex contains 11 subunits: 3 respiratory subunits (MT-CYB, CYC1 and UQCRFS1), 2 core proteins (UQCRC1 and UQCRC2) and 6 low-molecular weight proteins (UQCRH/QCR6, UQCRB/QCR7, UQCRQ/QCR8, UQCR10/QCR9, UQCR11/QCR10 and a cleavage product of UQCRFS1). This cytochrome bc1 complex then forms a dimer. It depends on heme b as a cofactor.

It localises to the mitochondrion inner membrane. Functionally, component of the ubiquinol-cytochrome c reductase complex (complex III or cytochrome b-c1 complex) that is part of the mitochondrial respiratory chain. The b-c1 complex mediates electron transfer from ubiquinol to cytochrome c. Contributes to the generation of a proton gradient across the mitochondrial membrane that is then used for ATP synthesis. The chain is Cytochrome b (MT-CYB) from Syrmaticus reevesii (Reeves's pheasant).